The following is a 356-amino-acid chain: Cobalt-precorrin-5B C(1)-methyltransferase (356 aa).

The protein belongs to the CbiD family.

The catalysed reaction is Co-precorrin-5B + S-adenosyl-L-methionine = Co-precorrin-6A + S-adenosyl-L-homocysteine. It functions in the pathway cofactor biosynthesis; adenosylcobalamin biosynthesis; cob(II)yrinate a,c-diamide from sirohydrochlorin (anaerobic route): step 6/10. Its function is as follows. Catalyzes the methylation of C-1 in cobalt-precorrin-5B to form cobalt-precorrin-6A. This chain is Cobalt-precorrin-5B C(1)-methyltransferase, found in Geobacter sp. (strain M21).